Here is a 294-residue protein sequence, read N- to C-terminus: DNA replication complex GINS protein SLD5 (294 aa).

Belongs to the GINS4/SLD5 family. In terms of assembly, component of the GINS complex which is a heterotetramer composed of SLD5, PSF1, PSF2 and PSF3. Interacts with PSF2.

It localises to the nucleus. Functionally, required for DNA replication. Functions as part of the GINS complex which plays an essential role in the initiation of DNA replication by binding to DNA replication origins and facilitating the assembly of the DNA replication machinery. In Saccharomyces cerevisiae (strain ATCC 204508 / S288c) (Baker's yeast), this protein is DNA replication complex GINS protein SLD5.